Reading from the N-terminus, the 210-residue chain is HTH-type transcriptional repressor FabR (210 aa).

The 61-residue stretch at 10–70 folds into the HTH tetR-type domain; it reads KTRRSLVEAA…TMVDESGLML (61 aa). The segment at residues 33–52 is a DNA-binding region (H-T-H motif); sequence SLREVAREAGIAPTSFYRHF.

As to quaternary structure, homodimer.

It localises to the cytoplasm. Represses the transcription of fabB, involved in unsaturated fatty acid (UFA) biosynthesis. By controlling UFA production, FabR directly influences the physical properties of the membrane bilayer. This is HTH-type transcriptional repressor FabR from Salmonella arizonae (strain ATCC BAA-731 / CDC346-86 / RSK2980).